The sequence spans 304 residues: MAFQECVIEIAQEQAEAWSDALFDLGALSVSVEDADADTPDEQPLFGEPGLEPTRLAWNRSRVVALFDEETDPALVVTAAANALKVDPVPPYALRGVEDQDWVRLTQSQFEPIRIGEKIWVVPSWHDAPDPDAVILELDPGLAFGTGSHPTTRLCMQWLEANVRAGETVLDYGCGSGILAIVAKKLGAGDTVGIDIDPNAVDASRYNAERNRVEASFALPESVSEATYDLVVANILSNPLKLMAAMLSARVRPGGRLILSGVLERQAEEVAAAYAPWIPMSVWRSEEGWVCLHGTRPAAPADRS.

S-adenosyl-L-methionine-binding residues include threonine 152, glycine 173, aspartate 195, and asparagine 234.

The protein belongs to the methyltransferase superfamily. PrmA family.

It is found in the cytoplasm. The enzyme catalyses L-lysyl-[protein] + 3 S-adenosyl-L-methionine = N(6),N(6),N(6)-trimethyl-L-lysyl-[protein] + 3 S-adenosyl-L-homocysteine + 3 H(+). Functionally, methylates ribosomal protein L11. The chain is Ribosomal protein L11 methyltransferase from Cupriavidus metallidurans (strain ATCC 43123 / DSM 2839 / NBRC 102507 / CH34) (Ralstonia metallidurans).